The following is a 238-amino-acid chain: 1-(5-phosphoribosyl)-5-[(5-phosphoribosylamino)methylideneamino] imidazole-4-carboxamide isomerase (238 aa).

Residue Asp8 is the Proton acceptor of the active site. Residue Asp129 is the Proton donor of the active site.

The protein belongs to the HisA/HisF family.

It is found in the cytoplasm. It catalyses the reaction 1-(5-phospho-beta-D-ribosyl)-5-[(5-phospho-beta-D-ribosylamino)methylideneamino]imidazole-4-carboxamide = 5-[(5-phospho-1-deoxy-D-ribulos-1-ylimino)methylamino]-1-(5-phospho-beta-D-ribosyl)imidazole-4-carboxamide. The protein operates within amino-acid biosynthesis; L-histidine biosynthesis; L-histidine from 5-phospho-alpha-D-ribose 1-diphosphate: step 4/9. This is 1-(5-phosphoribosyl)-5-[(5-phosphoribosylamino)methylideneamino] imidazole-4-carboxamide isomerase from Clostridium novyi (strain NT).